We begin with the raw amino-acid sequence, 115 residues long: MNFVLILMTNTLLALLLMIITFWLPQLNSYMEKSNPYECGFDPMSPARVPFSMKFFLVAITFLLFDLEIALLLPLPWALQTANLPLMVMSSLLLITILALSLAYEWLQKGLDWAE.

Helical transmembrane passes span Phe3 to Trp23, Phe55 to Leu75, and Leu84 to Tyr104.

This sequence belongs to the complex I subunit 3 family. Core subunit of respiratory chain NADH dehydrogenase (Complex I) which is composed of 45 different subunits. Interacts with TMEM186. Interacts with TMEM242.

The protein resides in the mitochondrion inner membrane. It catalyses the reaction a ubiquinone + NADH + 5 H(+)(in) = a ubiquinol + NAD(+) + 4 H(+)(out). In terms of biological role, core subunit of the mitochondrial membrane respiratory chain NADH dehydrogenase (Complex I) which catalyzes electron transfer from NADH through the respiratory chain, using ubiquinone as an electron acceptor. Essential for the catalytic activity of complex I. The protein is NADH-ubiquinone oxidoreductase chain 3 of Pan paniscus (Pygmy chimpanzee).